The chain runs to 301 residues: tRNA dimethylallyltransferase (301 aa).

8–15 (GPTAVGKT) serves as a coordination point for ATP. Residue 10-15 (TAVGKT) coordinates substrate. Positions 33–36 (DSRQ) are interaction with substrate tRNA.

This sequence belongs to the IPP transferase family. In terms of assembly, monomer. Mg(2+) is required as a cofactor.

It carries out the reaction adenosine(37) in tRNA + dimethylallyl diphosphate = N(6)-dimethylallyladenosine(37) in tRNA + diphosphate. In terms of biological role, catalyzes the transfer of a dimethylallyl group onto the adenine at position 37 in tRNAs that read codons beginning with uridine, leading to the formation of N6-(dimethylallyl)adenosine (i(6)A). The sequence is that of tRNA dimethylallyltransferase from Thermosipho melanesiensis (strain DSM 12029 / CIP 104789 / BI429).